Reading from the N-terminus, the 366-residue chain is tRNA/tmRNA (uracil-C(5))-methyltransferase (366 aa).

S-adenosyl-L-methionine is bound by residues glutamine 190, tyrosine 218, asparagine 223, glutamate 239, and aspartate 299. Residue cysteine 324 is the Nucleophile of the active site. Glutamate 358 serves as the catalytic Proton acceptor.

The protein belongs to the class I-like SAM-binding methyltransferase superfamily. RNA M5U methyltransferase family. TrmA subfamily.

The catalysed reaction is uridine(54) in tRNA + S-adenosyl-L-methionine = 5-methyluridine(54) in tRNA + S-adenosyl-L-homocysteine + H(+). It carries out the reaction uridine(341) in tmRNA + S-adenosyl-L-methionine = 5-methyluridine(341) in tmRNA + S-adenosyl-L-homocysteine + H(+). Its function is as follows. Dual-specificity methyltransferase that catalyzes the formation of 5-methyluridine at position 54 (m5U54) in all tRNAs, and that of position 341 (m5U341) in tmRNA (transfer-mRNA). This chain is tRNA/tmRNA (uracil-C(5))-methyltransferase, found in Cellvibrio japonicus (strain Ueda107) (Pseudomonas fluorescens subsp. cellulosa).